Consider the following 424-residue polypeptide: Synaptotagmin-1 (424 aa).

The Vesicular segment spans residues 1-60 (MVSESHHEALAAPPATTVAAALPSNVTEPAAPGGGGGKEDAFSNLKKKFMNELNKIPLPP). Asn25 carries N-linked (GlcNAc...) asparagine glycosylation. A helical membrane pass occupies residues 61–82 (WALIAIAIVAVLLILTCCFCLC). 5 S-palmitoyl cysteine lipidation sites follow: Cys77, Cys78, Cys80, Cys82, and Cys85. Over 83–424 (KKCLFKKKNK…EVDAMLAVKK (342 aa)) the chain is Cytoplasmic. The disordered stretch occupies residues 117 to 142 (KDQALKDDDAETGLTDGEEKEEPKEV). Positions 124–136 (DDAETGLTDGEEK) are enriched in acidic residues. The interval 138–384 (EPKEVEKLGK…AIGKVFVGYN (247 aa)) is phospholipid binding. 2 C2 domains span residues 144-263 (KLGK…EEWR) and 275-408 (KLGD…AQWH). Residues Leu174, Asp175, Asp181, Asp233, Phe234, Asp235, Ser238, Lys239, Asp241, Asp306, Asp312, Asp366, Asp368, and Asp374 each contribute to the Ca(2+) site.

The protein belongs to the synaptotagmin family. As to quaternary structure, homotetramer. Ca(2+) serves as cofactor.

It localises to the cytoplasmic vesicle. The protein localises to the secretory vesicle membrane. It is found in the secretory vesicle. Its subcellular location is the synaptic vesicle membrane. The protein resides in the chromaffin granule membrane. It localises to the cytoplasm. Its function is as follows. Calcium sensor that participates in triggering neurotransmitter release at the synapse. May have a regulatory role in the membrane interactions during trafficking of synaptic vesicles at the active zone of the synapse. It binds acidic phospholipids with a specificity that requires the presence of both an acidic head group and a diacyl backbone. May play a role in dendrite formation by melanocytes. The protein is Synaptotagmin-1 (SYT1) of Gallus gallus (Chicken).